Reading from the N-terminus, the 218-residue chain is Ras-related protein R-Ras (218 aa).

Residues 1–30 (MSSGAASGTGRGRPRGGGPGPRDPPPGETH) form a disordered region. Positions 7–20 (SGTGRGRPRGGGPG) are enriched in gly residues. 36 to 44 (GGGGVGKSA) is a binding site for GTP. Residues 58–66 (YDPTIEDSY) carry the Effector region motif. GTP-binding positions include 83 to 87 (DTAGQ), 142 to 145 (NKAD), and 172 to 174 (SAK). Cysteine 215 is subject to Cysteine methyl ester. A lipid anchor (S-geranylgeranyl cysteine) is attached at cysteine 215. The propeptide at 216-218 (VLL) is removed in mature form.

Belongs to the small GTPase superfamily. Ras family. In terms of assembly, interacts with PLCE1. Interacts (active GTP-bound form preferentially) with RGS14. Interacts with OSBPL3. Interacts with ZDHHC19. S-palmitoylated by ZDHHC19, leading to increased association with membranes and with rafts/caveolae as well as enhanced cell viability.

Its subcellular location is the cell membrane. The enzyme catalyses GTP + H2O = GDP + phosphate + H(+). In terms of biological role, GTP-binding protein with GTPase activity, likely involved in the regulation of MAPK signaling pathway and thereby controlling multiple cellular processes. Regulates the organization of the actin cytoskeleton. With OSPBL3, modulates integrin beta-1 (ITGB1) activity. The sequence is that of Ras-related protein R-Ras (Rras) from Mus musculus (Mouse).